The primary structure comprises 101 residues: Apolipoprotein C-II (101 aa).

The signal sequence occupies residues 1-22 (MGTRYFLVGFLILLVLGFEVQG). The lipid binding stretch occupies residues 66 to 74 (AVDEKIRDI). Residues 78–101 (STAAVTTYAGIITDQVFSVLSGKD) are lipoprotein lipase cofactor.

This sequence belongs to the apolipoprotein C2 family. In terms of processing, proapolipoprotein C-II is synthesized as a sialic acid containing glycoprotein which is subsequently desialylated prior to its proteolytic processing. Proapolipoprotein C-II undergoes proteolytic cleavage of its N-terminal hexapeptide to generate apolipoprotein C-II. In bovine, proapolipoprotein C-II was found to be the minor form whereas apolipoprotein C-II was found to be the major form in plasma.

It is found in the secreted. Functionally, component of chylomicrons, very low-density lipoproteins (VLDL), low-density lipoproteins (LDL), and high-density lipoproteins (HDL) in plasma. Plays an important role in lipoprotein metabolism as an activator of lipoprotein lipase. Both proapolipoprotein C-II and apolipoprotein C-II can activate lipoprotein lipase. This chain is Apolipoprotein C-II (APOC2), found in Bos taurus (Bovine).